Consider the following 159-residue polypeptide: Endoribonuclease YbeY (159 aa).

The Zn(2+) site is built by His124, His128, and His134.

It belongs to the endoribonuclease YbeY family. Zn(2+) is required as a cofactor.

It localises to the cytoplasm. In terms of biological role, single strand-specific metallo-endoribonuclease involved in late-stage 70S ribosome quality control and in maturation of the 3' terminus of the 16S rRNA. This Halalkalibacterium halodurans (strain ATCC BAA-125 / DSM 18197 / FERM 7344 / JCM 9153 / C-125) (Bacillus halodurans) protein is Endoribonuclease YbeY.